The following is a 573-amino-acid chain: 2-succinyl-5-enolpyruvyl-6-hydroxy-3-cyclohexene-1-carboxylate synthase (573 aa).

The protein belongs to the TPP enzyme family. MenD subfamily. As to quaternary structure, homodimer. It depends on Mg(2+) as a cofactor. Requires Mn(2+) as cofactor. Thiamine diphosphate serves as cofactor.

It carries out the reaction isochorismate + 2-oxoglutarate + H(+) = 5-enolpyruvoyl-6-hydroxy-2-succinyl-cyclohex-3-ene-1-carboxylate + CO2. The protein operates within quinol/quinone metabolism; 1,4-dihydroxy-2-naphthoate biosynthesis; 1,4-dihydroxy-2-naphthoate from chorismate: step 2/7. It participates in quinol/quinone metabolism; menaquinone biosynthesis. Catalyzes the thiamine diphosphate-dependent decarboxylation of 2-oxoglutarate and the subsequent addition of the resulting succinic semialdehyde-thiamine pyrophosphate anion to isochorismate to yield 2-succinyl-5-enolpyruvyl-6-hydroxy-3-cyclohexene-1-carboxylate (SEPHCHC). This is 2-succinyl-5-enolpyruvyl-6-hydroxy-3-cyclohexene-1-carboxylate synthase from Shewanella sp. (strain W3-18-1).